We begin with the raw amino-acid sequence, 325 residues long: NADH-quinone oxidoreductase subunit H (325 aa).

Transmembrane regions (helical) follow at residues 11–31 (ILLS…CGAF), 50–69 (NRVG…KMFF), 81–101 (VIFT…FAIV), 114–134 (IGIL…LFAG), 154–174 (VSYE…AGSF), 186–206 (LWNV…GVAV), 237–257 (FFVG…TLFF), 265–285 (LPPF…FILI), and 304–324 (VCLP…LWQA).

The protein belongs to the complex I subunit 1 family. NDH-1 is composed of 13 different subunits. Subunits NuoA, H, J, K, L, M, N constitute the membrane sector of the complex.

The protein resides in the cell inner membrane. It catalyses the reaction a quinone + NADH + 5 H(+)(in) = a quinol + NAD(+) + 4 H(+)(out). In terms of biological role, NDH-1 shuttles electrons from NADH, via FMN and iron-sulfur (Fe-S) centers, to quinones in the respiratory chain. The immediate electron acceptor for the enzyme in this species is believed to be ubiquinone. Couples the redox reaction to proton translocation (for every two electrons transferred, four hydrogen ions are translocated across the cytoplasmic membrane), and thus conserves the redox energy in a proton gradient. This subunit may bind ubiquinone. The protein is NADH-quinone oxidoreductase subunit H of Salmonella agona (strain SL483).